Reading from the N-terminus, the 202-residue chain is Small ribosomal subunit protein uS4 (202 aa).

Residues 22 to 43 form a disordered region; sequence TRKSARRAYPPGQHGQNRRKRS. Residues 90-152 form the S4 RNA-binding domain; that stretch reads MRLDNTVFRL…EKSKEMVKTN (63 aa).

The protein belongs to the universal ribosomal protein uS4 family. Part of the 30S ribosomal subunit. Contacts protein S5. The interaction surface between S4 and S5 is involved in control of translational fidelity.

In terms of biological role, one of the primary rRNA binding proteins, it binds directly to 16S rRNA where it nucleates assembly of the body of the 30S subunit. Its function is as follows. With S5 and S12 plays an important role in translational accuracy. The polypeptide is Small ribosomal subunit protein uS4 (Trichodesmium erythraeum (strain IMS101)).